We begin with the raw amino-acid sequence, 338 residues long: Ketol-acid reductoisomerase (NADP(+)) (338 aa).

One can recognise a KARI N-terminal Rossmann domain in the interval 1 to 181 (MQVYYDKDCD…GGGRTGIIET (181 aa)). Residues 24-27 (YGSQ), Arg-47, Ser-50, Ser-52, and 82-85 (DEFQ) each bind NADP(+). His-107 is an active-site residue. Gly-133 lines the NADP(+) pocket. In terms of domain architecture, KARI C-terminal knotted spans 182 to 327 (TFKDETETDL…EKLRAMMPWI (146 aa)). Residues Asp-190, Glu-194, Glu-226, and Glu-230 each coordinate Mg(2+). Substrate is bound at residue Ser-251.

The protein belongs to the ketol-acid reductoisomerase family. Mg(2+) serves as cofactor.

The catalysed reaction is (2R)-2,3-dihydroxy-3-methylbutanoate + NADP(+) = (2S)-2-acetolactate + NADPH + H(+). It catalyses the reaction (2R,3R)-2,3-dihydroxy-3-methylpentanoate + NADP(+) = (S)-2-ethyl-2-hydroxy-3-oxobutanoate + NADPH + H(+). The protein operates within amino-acid biosynthesis; L-isoleucine biosynthesis; L-isoleucine from 2-oxobutanoate: step 2/4. It participates in amino-acid biosynthesis; L-valine biosynthesis; L-valine from pyruvate: step 2/4. Involved in the biosynthesis of branched-chain amino acids (BCAA). Catalyzes an alkyl-migration followed by a ketol-acid reduction of (S)-2-acetolactate (S2AL) to yield (R)-2,3-dihydroxy-isovalerate. In the isomerase reaction, S2AL is rearranged via a Mg-dependent methyl migration to produce 3-hydroxy-3-methyl-2-ketobutyrate (HMKB). In the reductase reaction, this 2-ketoacid undergoes a metal-dependent reduction by NADPH to yield (R)-2,3-dihydroxy-isovalerate. This Teredinibacter turnerae (strain ATCC 39867 / T7901) protein is Ketol-acid reductoisomerase (NADP(+)).